Reading from the N-terminus, the 430-residue chain is Serine--tRNA ligase (430 aa).

A disordered region spans residues 44–65 (TESLQAERNSRSKSIGAAKARG). Residue 237–239 (TAE) participates in L-serine binding. Position 268–270 (268–270 (RSE)) interacts with ATP. Glutamate 291 is a binding site for L-serine. 355–358 (EISS) serves as a coordination point for ATP. Position 391 (serine 391) interacts with L-serine.

This sequence belongs to the class-II aminoacyl-tRNA synthetase family. Type-1 seryl-tRNA synthetase subfamily. Homodimer. The tRNA molecule binds across the dimer.

Its subcellular location is the cytoplasm. The enzyme catalyses tRNA(Ser) + L-serine + ATP = L-seryl-tRNA(Ser) + AMP + diphosphate + H(+). It catalyses the reaction tRNA(Sec) + L-serine + ATP = L-seryl-tRNA(Sec) + AMP + diphosphate + H(+). It functions in the pathway aminoacyl-tRNA biosynthesis; selenocysteinyl-tRNA(Sec) biosynthesis; L-seryl-tRNA(Sec) from L-serine and tRNA(Sec): step 1/1. In terms of biological role, catalyzes the attachment of serine to tRNA(Ser). Is also able to aminoacylate tRNA(Sec) with serine, to form the misacylated tRNA L-seryl-tRNA(Sec), which will be further converted into selenocysteinyl-tRNA(Sec). This is Serine--tRNA ligase from Edwardsiella ictaluri (strain 93-146).